The chain runs to 435 residues: Serine carboxypeptidase-like 14 (435 aa).

Residues 1 to 23 (MGSWIPKLLLLQLVLLLTKHADS) form the signal peptide. 3 disulfides stabilise this stretch: cysteine 82-cysteine 325, cysteine 246-cysteine 260, and cysteine 284-cysteine 291. A glycan (N-linked (GlcNAc...) asparagine) is linked at asparagine 103. Residue serine 178 is part of the active site. An N-linked (GlcNAc...) asparagine glycan is attached at asparagine 344. Aspartate 360 is an active-site residue. A glycan (N-linked (GlcNAc...) asparagine) is linked at asparagine 376. Histidine 413 is an active-site residue.

It belongs to the peptidase S10 family. Expressed in senescent leaves.

It localises to the secreted. Probable carboxypeptidase. The polypeptide is Serine carboxypeptidase-like 14 (SCPL14) (Arabidopsis thaliana (Mouse-ear cress)).